Reading from the N-terminus, the 461-residue chain is Trimethylamine monooxygenase (461 aa).

7 residues coordinate FAD: Ser14, Glu39, Lys40, Gln41, Met47, Trp48, and His64. 2 residues coordinate NADP(+): Trp72 and Asn74. Positions 74 and 127 each coordinate FAD. 5 residues coordinate NADP(+): Ser206, Ser207, Ser209, Arg230, and Thr231. Residues Gln319 and Thr322 each contribute to the FAD site. Arg413 lines the NADP(+) pocket.

Belongs to the FMO family. Requires FAD as cofactor.

It catalyses the reaction trimethylamine + NADPH + O2 = trimethylamine N-oxide + NADP(+) + H2O. Functionally, catalyzes the oxidation of trimethylamine (TMA) to produce trimethylamine N-oxide (TMAO). The produced TMAO is accumulated in the cell, functioning as a piezolyte, improving both growth and survival at high hydrostatic pressure (HHP). This chain is Trimethylamine monooxygenase, found in Myroides profundi.